The sequence spans 176 residues: Urease accessory protein UreE (176 aa).

The interval 147–176 (AGAYQQGGGHSHGHAHSHSHEKPHSHTHNH) is disordered.

This sequence belongs to the UreE family.

The protein localises to the cytoplasm. Involved in urease metallocenter assembly. Binds nickel. Probably functions as a nickel donor during metallocenter assembly. The protein is Urease accessory protein UreE of Alcanivorax borkumensis (strain ATCC 700651 / DSM 11573 / NCIMB 13689 / SK2).